The chain runs to 467 residues: Inactive pancreatic lipase-related protein 1 (467 aa).

The first 17 residues, 1-17 (MLIFWTITLFLLGAAKG), serve as a signal peptide directing secretion. Cystine bridges form between cysteine 21/cysteine 27 and cysteine 109/cysteine 120. The active-site Nucleophile is the serine 171. Aspartate 194 acts as the Charge relay system in catalysis. Ca(2+)-binding residues include glutamate 205, arginine 208, aspartate 210, and aspartate 213. Cysteines 255 and 279 form a disulfide. The active-site Charge relay system is the histidine 281. 3 cysteine pairs are disulfide-bonded: cysteine 303-cysteine 314, cysteine 317-cysteine 322, and cysteine 451-cysteine 467. Positions 356 to 467 (WRYGVSITLS…EDTLLTLTPC (112 aa)) constitute a PLAT domain.

The protein belongs to the AB hydrolase superfamily. Lipase family. In terms of tissue distribution, pancreas.

It is found in the secreted. Its function is as follows. May function as inhibitor of dietary triglyceride digestion. Lacks detectable lipase activity towards triglycerides, diglycerides, phosphatidylcholine, galactolipids or cholesterol esters (in vitro). This Homo sapiens (Human) protein is Inactive pancreatic lipase-related protein 1 (PNLIPRP1).